A 1218-amino-acid polypeptide reads, in one-letter code: Protein dispatched (1218 aa).

Residues 21-41 (YLVVVSIAVYCVACIIVALVL) traverse the membrane as a helical segment. The disordered stretch occupies residues 99–135 (VETKLHPNHRRRKNKHKNRNKNKRRKEQNQSSHEHHD). Residues 104-124 (HPNHRRRKNKHKNRNKNKRRK) show a composition bias toward basic residues. N127, N176, N197, N264, N319, and N388 each carry an N-linked (GlcNAc...) asparagine glycan. Positions 430 to 624 (AMDLGLENEL…ITWLPASVSI (195 aa)) constitute an SSD domain. Transmembrane regions (helical) follow at residues 443 to 463 (LLLT…ASVW), 473 to 493 (LMSC…YAIV), 504 to 524 (LLAV…FLKI), 570 to 590 (AAAS…ASYS), 598 to 618 (CFGI…ITWL), and 670 to 690 (AYLW…IVFW). N-linked (GlcNAc...) asparagine glycosylation is found at N767, N883, and N891. Helical transmembrane passes span 975 to 995 (LAVL…VLTV), 996 to 1016 (SLSI…LNIL), 1019 to 1039 (IAVS…GIHY), 1058 to 1078 (IIGP…IMMA), and 1087 to 1107 (IGVF…FFLM).

It belongs to the dispatched family.

The protein resides in the membrane. Its function is as follows. Segment polarity protein which functions in hedgehog (Hh) signaling. Regulates the trafficking and the release of cholesterol-modified hedgehog protein from cells of the posterior compartment (P cells) and is hence required for the effective production of the Hh signal. In Drosophila melanogaster (Fruit fly), this protein is Protein dispatched (disp).